The following is a 66-amino-acid chain: Sodium/potassium-transporting ATPase subunit gamma (66 aa).

A helical membrane pass occupies residues 29–46 (GGLIFAGLAFVVGLLILL).

Belongs to the FXYD family. As to quaternary structure, regulatory subunit of the sodium/potassium-transporting ATPase which is composed of a catalytic alpha subunit, an auxiliary non-catalytic beta subunit and an additional regulatory subunit. In terms of tissue distribution, highest levels expressed in the kidney and spleen. Restricted to the basolateral membrane in renal epithelial cells and varies in its level of expression along the nephron.

It is found in the membrane. Its function is as follows. May be involved in forming the receptor site for cardiac glycoside binding or may modulate the transport function of the sodium ATPase. This is Sodium/potassium-transporting ATPase subunit gamma (Fxyd2) from Rattus norvegicus (Rat).